The following is a 494-amino-acid chain: Glycosyl hydrolase family 109 protein (494 aa).

The interval 1 to 32 (MNDDARPAPEPQDIPPHSGAADEVNRQDPSRR) is disordered. The tat-type signal signal peptide spans 1 to 58 (MNDDARPAPEPQDIPPHSGAADEVNRQDPSRRSVLWTTAGVAGAGLGLGALGAGTASA). Residues 104–105 (NR), Asp-126, 175–178 (WELH), 195–196 (EC), and Asn-224 contribute to the NAD(+) site. Residues Tyr-253, Arg-272, 284–287 (YPNH), and Tyr-366 contribute to the substrate site. Tyr-284 lines the NAD(+) pocket.

It belongs to the Gfo/Idh/MocA family. Glycosyl hydrolase 109 subfamily. NAD(+) is required as a cofactor. In terms of processing, predicted to be exported by the Tat system. The position of the signal peptide cleavage has not been experimentally proven.

Glycosidase. This chain is Glycosyl hydrolase family 109 protein, found in Streptomyces filamentosus (Streptomyces roseosporus).